Consider the following 476-residue polypeptide: tRNA(Ile)-lysidine synthase (476 aa).

25–30 (SGGPDS) lines the ATP pocket.

The protein belongs to the tRNA(Ile)-lysidine synthase family.

Its subcellular location is the cytoplasm. The enzyme catalyses cytidine(34) in tRNA(Ile2) + L-lysine + ATP = lysidine(34) in tRNA(Ile2) + AMP + diphosphate + H(+). Its function is as follows. Ligates lysine onto the cytidine present at position 34 of the AUA codon-specific tRNA(Ile) that contains the anticodon CAU, in an ATP-dependent manner. Cytidine is converted to lysidine, thus changing the amino acid specificity of the tRNA from methionine to isoleucine. The polypeptide is tRNA(Ile)-lysidine synthase (Bacillus licheniformis (strain ATCC 14580 / DSM 13 / JCM 2505 / CCUG 7422 / NBRC 12200 / NCIMB 9375 / NCTC 10341 / NRRL NRS-1264 / Gibson 46)).